A 376-amino-acid polypeptide reads, in one-letter code: N-acetyldiaminopimelate deacetylase (376 aa).

Asp69 is a catalytic residue. Glu128 serves as the catalytic Proton acceptor.

Belongs to the peptidase M20A family. N-acetyldiaminopimelate deacetylase subfamily.

It catalyses the reaction N-acetyl-(2S,6S)-2,6-diaminopimelate + H2O = (2S,6S)-2,6-diaminopimelate + acetate. The protein operates within amino-acid biosynthesis; L-lysine biosynthesis via DAP pathway; LL-2,6-diaminopimelate from (S)-tetrahydrodipicolinate (acetylase route): step 3/3. Catalyzes the conversion of N-acetyl-diaminopimelate to diaminopimelate and acetate. This Bacillus anthracis (strain A0248) protein is N-acetyldiaminopimelate deacetylase.